We begin with the raw amino-acid sequence, 256 residues long: 3-hydroxy-5-phosphonooxypentane-2,4-dione thiolase (256 aa).

The Schiff-base intermediate with substrate role is filled by Lys168.

The protein belongs to the DeoC/FbaB aldolase family. In terms of assembly, homodecamer.

It localises to the cytoplasm. The enzyme catalyses dihydroxyacetone phosphate + acetyl-CoA = 3-hydroxy-2,4-dioxopentyl phosphate + CoA. In terms of biological role, involved in the degradation of phospho-AI-2, thereby terminating induction of the lsr operon and closing the AI-2 signaling cycle. Catalyzes the transfer of an acetyl moiety from 3-hydroxy-5-phosphonooxypentane-2,4-dione to CoA to form glycerone phosphate and acetyl-CoA. This chain is 3-hydroxy-5-phosphonooxypentane-2,4-dione thiolase (lsrF), found in Shigella flexneri.